We begin with the raw amino-acid sequence, 3268 residues long: E3 ubiquitin-protein ligase TOM1 (3268 aa).

Position 1890 is a phosphoserine (S1890). 2 disordered regions span residues 1941–2023 (VFSD…EDDA) and 2038–2083 (GYDV…MGDS). Positions 1942–1955 (FSDEDDDMGEEDAD) are enriched in acidic residues. Positions 1967-1976 (SSEMQSSTAD) are enriched in polar residues. Acidic residues-rich tracts occupy residues 1978–1988 (TDVDYEVDDAD), 2042–2053 (DLSDYDVDESDW), and 2063–2074 (SDEDSESSEDEP). The residue at position 2096 (T2096) is a Phosphothreonine. Residues S2119, S2376, S2406, and S2418 each carry the phosphoserine modification. Over residues 2416–2426 (DVSNNDEEVEN) the composition is skewed to acidic residues. The segment at 2416 to 2443 (DVSNNDEEVENGLDHGNSNDRNNADPEK) is disordered. Residues 2932–3268 (TNDEIKNSKL…NEGHEGFGLA (337 aa)) form the HECT domain. C3235 acts as the Glycyl thioester intermediate in catalysis.

It belongs to the UPL family. TOM1/PTR1 subfamily. As to quaternary structure, interacts with the ADA3/NGG1 subunit of the SAGA complex. Interacts with KRR1.

The protein resides in the nucleus. The protein localises to the nucleolus. It catalyses the reaction S-ubiquitinyl-[E2 ubiquitin-conjugating enzyme]-L-cysteine + [acceptor protein]-L-lysine = [E2 ubiquitin-conjugating enzyme]-L-cysteine + N(6)-ubiquitinyl-[acceptor protein]-L-lysine.. Its pathway is protein modification; protein ubiquitination. Probable ubiquitin ligase protein involved in many cellular processes, such as transcription regulation, maintenance of nuclear structure, cell cycle, mRNA export and rRNA maturation. E3 ubiquitin ligase proteins mediate ubiquitination and subsequent proteasomal degradation of target proteins. Involved in transcription regulation by interacting, and probably mediating, ubiquitination of some subunit of the SAGA complex. Required for SPT7 ubiquitination. Participates in mRNA export from the nucleus by regulating the transport of hnRNP proteins. Required for the shuttling of hnRNP protein NAB2, probably by mediating ubiquitination of a protein associated with NAB2. Also required for full induction of the general stress and heat-shock responses. Involved in 18S rRNA maturation by affecting several early steps in the rRNA processing pathway. The polypeptide is E3 ubiquitin-protein ligase TOM1 (TOM1) (Saccharomyces cerevisiae (strain ATCC 204508 / S288c) (Baker's yeast)).